The chain runs to 426 residues: Lipase 7 (426 aa).

The first 15 residues, 1 to 15 (MFVFLALITLTTCLQ), serve as a signal peptide directing secretion. N-linked (GlcNAc...) asparagine glycans are attached at residues N74, N175, and N179. Cystine bridges form between C108–C269 and C341–C385. S190 functions as the Charge relay system in the catalytic mechanism. N-linked (GlcNAc...) asparagine glycosylation is present at N223. H358 (charge relay system) is an active-site residue. N-linked (GlcNAc...) asparagine glycosylation is found at N378, N379, N422, and N423.

This sequence belongs to the AB hydrolase superfamily. Lipase family. Class Lip subfamily.

The catalysed reaction is a triacylglycerol + H2O = a diacylglycerol + a fatty acid + H(+). Functionally, secreted lipase that is able to hydrolze both the neutral triacylglycerols and the monopalmitate ester Tween 40, allowing the use of hydrolyzed products as carbon sources. Has broad lipolytic activity, which may be important for colonization and subsequent infection, therefore contributing to the persistence and virulence in human tissue. The sequence is that of Lipase 7 from Candida albicans (strain SC5314 / ATCC MYA-2876) (Yeast).